Here is a 294-residue protein sequence, read N- to C-terminus: Phosphoribosylaminoimidazole-succinocarboxamide synthase (294 aa).

Belongs to the SAICAR synthetase family.

The catalysed reaction is 5-amino-1-(5-phospho-D-ribosyl)imidazole-4-carboxylate + L-aspartate + ATP = (2S)-2-[5-amino-1-(5-phospho-beta-D-ribosyl)imidazole-4-carboxamido]succinate + ADP + phosphate + 2 H(+). The protein operates within purine metabolism; IMP biosynthesis via de novo pathway; 5-amino-1-(5-phospho-D-ribosyl)imidazole-4-carboxamide from 5-amino-1-(5-phospho-D-ribosyl)imidazole-4-carboxylate: step 1/2. In Thermoplasma acidophilum (strain ATCC 25905 / DSM 1728 / JCM 9062 / NBRC 15155 / AMRC-C165), this protein is Phosphoribosylaminoimidazole-succinocarboxamide synthase.